The following is a 169-amino-acid chain: Gametocyte-specific factor 1-like (169 aa).

CHHC U11-48K-type zinc fingers lie at residues 6–33 and 40–67; these read LETCPYNPHHRIPLSRFQYHLASCRRKN and MASCKYNACHVVPIKKLEEHEAACVNKS. Zn(2+) is bound by residues cysteine 9, histidine 15, histidine 25, cysteine 29, cysteine 43, histidine 49, histidine 59, and cysteine 63. Disordered stretches follow at residues 67–103 and 131–169; these read STMEEEDSLSPLKVSLPNAGQKGNRNASPVSPRLPNP and SDTRESETDDHNPIPDCPRRRSSDRESEPPAEDTSLLKA. The span at 131 to 158 shows a compositional bias: basic and acidic residues; that stretch reads SDTRESETDDHNPIPDCPRRRSSDRESE.

The protein belongs to the UPF0224 (FAM112) family.

This chain is Gametocyte-specific factor 1-like (GTSF1L), found in Bos taurus (Bovine).